The chain runs to 243 residues: MAAAIASSLIRQKRQARESNSDRVSASKRRSSPSKDGRSLCERHVLGVFSKVRFCSGRKRPVRRRPEPQLKGIVTRLFSQQGYFLQMHPDGTIDGTKDENSDYTLFNLIPVGLRVVAIQGVKASLYVAMNGEGYLYSSDVFTPECKFKESVFENYYVIYSSTLYRQQESGRAWFLGLNKEGQIMKGNRVKKTKPSSHFVPKPIEVCMYREPSLHEIGEKQGRSRKSSGTPTMNGGKVVNQDST.

Disordered regions lie at residues 1 to 39 (MAAAIASSLIRQKRQARESNSDRVSASKRRSSPSKDGRS) and 216 to 243 (IGEKQGRSRKSSGTPTMNGGKVVNQDST). A Bipartite nuclear localization signal motif is present at residues 11–38 (RQKRQARESNSDRVSASKRRSSPSKDGR).

The protein belongs to the heparin-binding growth factors family. Interacts with the C-terminal region of SCN9A. In terms of tissue distribution, brain, eye and testis; highly expressed in embryonic retina, olfactory epithelium, olfactory bulb, and in a segmental pattern of the body wall; in adult olfactory bulb, less in cerebellum, deep cerebellar nuclei, cortex and multiple midbrain structures.

It localises to the nucleus. Functionally, involved in nervous system development and function. Involved in the positive regulation of voltage-gated sodium channel activity. Promotes neuronal excitability by elevating the voltage dependence of neuronal sodium channel SCN8A fast inactivation. The chain is Fibroblast growth factor 12 (FGF12) from Homo sapiens (Human).